The primary structure comprises 581 residues: Arginine--tRNA ligase (581 aa).

The short motif at 131-141 is the 'HIGH' region element; that stretch reads ANPTGPLHVGH.

The protein belongs to the class-I aminoacyl-tRNA synthetase family. Monomer.

It localises to the cytoplasm. It carries out the reaction tRNA(Arg) + L-arginine + ATP = L-arginyl-tRNA(Arg) + AMP + diphosphate. In Nitrosospira multiformis (strain ATCC 25196 / NCIMB 11849 / C 71), this protein is Arginine--tRNA ligase.